Reading from the N-terminus, the 323-residue chain is NADH-ubiquinone oxidoreductase chain 1 (323 aa).

Helical transmembrane passes span 9-29 (ILNP…LTLI), 76-96 (LFVL…PMPM), 107-127 (ILFV…SGWA), 145-165 (ISYE…SGGF), 175-195 (EATW…ISTL), 227-247 (LFFL…AVLF), 258-278 (EFTS…FLWV), and 298-318 (FLPL…ACAG).

Belongs to the complex I subunit 1 family.

It localises to the mitochondrion inner membrane. It catalyses the reaction a ubiquinone + NADH + 5 H(+)(in) = a ubiquinol + NAD(+) + 4 H(+)(out). Its function is as follows. Core subunit of the mitochondrial membrane respiratory chain NADH dehydrogenase (Complex I) that is believed to belong to the minimal assembly required for catalysis. Complex I functions in the transfer of electrons from NADH to the respiratory chain. The immediate electron acceptor for the enzyme is believed to be ubiquinone. This chain is NADH-ubiquinone oxidoreductase chain 1 (MT-ND1), found in Gadus morhua (Atlantic cod).